A 192-amino-acid polypeptide reads, in one-letter code: GTP-binding protein RHO2 (192 aa).

A GTP-binding site is contributed by 14–21; that stretch reads GDGACGKT. The short motif at 36–44 is the Effector region element; it reads YHPTVFENY. Residues 61 to 65 and 119 to 122 contribute to the GTP site; these read DTAGQ and LKKD. A lipid anchor (S-palmitoyl cysteine) is attached at Cys-188. Residue Cys-189 is modified to Cysteine methyl ester. Cys-189 carries the S-geranylgeranyl cysteine lipid modification. The propeptide at 190-192 is removed in mature form; it reads IIL.

Belongs to the small GTPase superfamily. Rho family. Interacts with BEM4.

It localises to the cell membrane. The catalysed reaction is GTP + H2O = GDP + phosphate + H(+). The polypeptide is GTP-binding protein RHO2 (RHO2) (Saccharomyces cerevisiae (strain ATCC 204508 / S288c) (Baker's yeast)).